Consider the following 327-residue polypeptide: N-acetylmuramoyl-L-alanine amidase sle1 (327 aa).

The first 25 residues, 1–25 (MRKKIIATVIGTSALAAVTWTNADA), serve as a signal peptide directing secretion. LysM domains are found at residues 27 to 70 (TTYK…SLKV), 86 to 129 (STYT…KLKV), and 150 to 193 (TTYT…KLKV). The tract at residues 68-89 (LKVSGSTSSSTSSNTSTGSTYT) is disordered. Residues 71 to 87 (SGSTSSSTSSNTSTGST) are compositionally biased toward low complexity. Positions 203–327 (GSSSTGSAGY…SQVSSYVYIH (125 aa)) constitute a Peptidase C51 domain.

It is found in the secreted. It localises to the cell surface. It carries out the reaction Hydrolyzes the link between N-acetylmuramoyl residues and L-amino acid residues in certain cell-wall glycopeptides.. Peptidoglycan hydrolase involved in the splitting of the septum during cell division. The protein is N-acetylmuramoyl-L-alanine amidase sle1 (sle1) of Staphylococcus saprophyticus subsp. saprophyticus (strain ATCC 15305 / DSM 20229 / NCIMB 8711 / NCTC 7292 / S-41).